We begin with the raw amino-acid sequence, 356 residues long: Uroporphyrinogen decarboxylase (356 aa).

Substrate contacts are provided by residues 27-31, Asp77, Tyr154, Thr209, and His327; that span reads RQAGR.

It belongs to the uroporphyrinogen decarboxylase family. In terms of assembly, homodimer.

It localises to the cytoplasm. It carries out the reaction uroporphyrinogen III + 4 H(+) = coproporphyrinogen III + 4 CO2. The protein operates within porphyrin-containing compound metabolism; protoporphyrin-IX biosynthesis; coproporphyrinogen-III from 5-aminolevulinate: step 4/4. In terms of biological role, catalyzes the decarboxylation of four acetate groups of uroporphyrinogen-III to yield coproporphyrinogen-III. The protein is Uroporphyrinogen decarboxylase of Hahella chejuensis (strain KCTC 2396).